The chain runs to 399 residues: Tryptophan synthase beta chain (399 aa).

Lysine 92 is modified (N6-(pyridoxal phosphate)lysine).

The protein belongs to the TrpB family. Tetramer of two alpha and two beta chains. The cofactor is pyridoxal 5'-phosphate.

The enzyme catalyses (1S,2R)-1-C-(indol-3-yl)glycerol 3-phosphate + L-serine = D-glyceraldehyde 3-phosphate + L-tryptophan + H2O. It participates in amino-acid biosynthesis; L-tryptophan biosynthesis; L-tryptophan from chorismate: step 5/5. Functionally, the beta subunit is responsible for the synthesis of L-tryptophan from indole and L-serine. This is Tryptophan synthase beta chain from Exiguobacterium sibiricum (strain DSM 17290 / CCUG 55495 / CIP 109462 / JCM 13490 / 255-15).